The chain runs to 207 residues: Ras-related protein Rab-5B (207 aa).

A lipid anchor (N-myristoyl glycine) is attached at G2. Residues 41–49 (GDSGVGKSS), 60–66 (SEKHQVT), 90–94 (DTGGQ), 148–151 (NKKD), and 176–178 (SAK) each bind GTP. The short motif at 63 to 71 (HQVTIGAAF) is the Effector region element.

The protein belongs to the small GTPase superfamily. Rab family. Interacts with CK1. May interact with ARF1. In terms of processing, myristoylation is required for cell membrane and food vacuole membrane localization. May be palmitoylated on Cys-3. Post-translationally, lacks the C-terminal cysteine motifs subject to isoprenylation present in mammalian RAB5B homolog.

The protein resides in the cell membrane. It is found in the vacuole membrane. It localises to the vesicle. It catalyses the reaction GTP + H2O = GDP + phosphate + H(+). Alternates between an inactive GDP-bound form and an active GTP-bound form. Activated by guanine nucleotide-exchange factors (GEFs) and inactivated by GTPase-activating proteins (GAPs). Functionally, small GTPase which regulates vesicle trafficking between organelles. May be involved in the trafficking of the N-myristoylated AK2 from the endoplasmic reticulum to the parasitophorous vacuole membrane. The polypeptide is Ras-related protein Rab-5B (Plasmodium falciparum (isolate 3D7)).